Reading from the N-terminus, the 465-residue chain is D-arabinitol 4-dehydrogenase (465 aa).

This sequence belongs to the mannitol dehydrogenase family.

The catalysed reaction is D-arabinitol + NAD(+) = D-xylulose + NADH + H(+). It participates in carbohydrate metabolism; D-arabinitol metabolism. This is D-arabinitol 4-dehydrogenase (dalD) from Ralstonia nicotianae (strain ATCC BAA-1114 / GMI1000) (Ralstonia solanacearum).